Consider the following 802-residue polypeptide: E3 ubiquitin-protein ligase RNF10 (802 aa).

Low complexity-rich tracts occupy residues 1–31, 78–90, and 104–113; these read MPQS…SGSS, SNQS…QKSK, and SKPFSSSSNG. The disordered stretch occupies residues 1-134; that stretch reads MPQSSPSTAA…AEFSPAQFSG (134 aa). S5 is modified (phosphoserine). S110 is subject to Phosphoserine. A compositionally biased stretch (basic and acidic residues) spans 114 to 124; the sequence is GRRDEVAEAQR. S128 bears the Phosphoserine mark. Residues 225-267 form an RING-type zinc finger; that stretch reads CPICLYPPTAAKITRCGHIFCWACILHYLSLSERTWSKCPICY. Residues 645 to 654 are compositionally biased toward polar residues; sequence DSALGPTSTE. Disordered stretches follow at residues 645-664, 716-753, and 767-802; these read DSAL…LSPL, DGWP…VPSF, and KLDT…VHTK. Over residues 716–728 the composition is skewed to basic and acidic residues; it reads DGWPKAAPKKDDN. Positions 793-802 are enriched in polar residues; it reads LFSTSVVHTK.

This sequence belongs to the RNF10 family. As to quaternary structure, interacts with MEOX2.

The protein localises to the cytoplasm. It localises to the nucleus. It catalyses the reaction S-ubiquitinyl-[E2 ubiquitin-conjugating enzyme]-L-cysteine + [acceptor protein]-L-lysine = [E2 ubiquitin-conjugating enzyme]-L-cysteine + N(6)-ubiquitinyl-[acceptor protein]-L-lysine.. The protein operates within protein modification; protein ubiquitination. Its function is as follows. E3 ubiquitin-protein ligase that catalyzes monoubiquitination of 40S ribosomal proteins RPS2/us5 and RPS3/us3 in response to ribosome stalling. Part of a ribosome quality control that takes place when ribosomes have stalled during translation initiation (iRQC): RNF10 acts by mediating monoubiquitination of RPS2/us5 and RPS3/us3, promoting their degradation by the proteasome. Also promotes ubiquitination of 40S ribosomal proteins in response to ribosome stalling during translation elongation. The action of RNF10 in iRQC is counteracted by USP10. May also act as a transcriptional factor involved in the regulation of MAG (Myelin-associated glycoprotein) expression. Acts as a regulator of Schwann cell differentiation and myelination. The polypeptide is E3 ubiquitin-protein ligase RNF10 (Rattus norvegicus (Rat)).